Reading from the N-terminus, the 174-residue chain is Nucleoside-triphosphatase THEP1 (174 aa).

ATP contacts are provided by residues 8 to 15 (GIPGIGKS) and 99 to 106 (LIVIDEVG).

It belongs to the THEP1 NTPase family.

The enzyme catalyses a ribonucleoside 5'-triphosphate + H2O = a ribonucleoside 5'-diphosphate + phosphate + H(+). In terms of biological role, has nucleotide phosphatase activity towards ATP, GTP, CTP, TTP and UTP. May hydrolyze nucleoside diphosphates with lower efficiency. This Methanosarcina barkeri (strain Fusaro / DSM 804) protein is Nucleoside-triphosphatase THEP1.